A 336-amino-acid chain; its full sequence is Galactose/methyl galactoside import permease protein MglC (336 aa).

Over 1-16 (MSALNKKSFLTYLKEG) the chain is Periplasmic. A helical transmembrane segment spans residues 17–37 (GIYVVLLVLLAIIIFQDPTFL). Residues 38 to 52 (SLLNLSNILTQSSVR) are Cytoplasmic-facing. A helical transmembrane segment spans residues 53 to 73 (IIIALGVAGLIVTQGTDLSAG). At 74–106 (RQVGLAAVVAATLLQSMDNANKVFPEMATMPIA) the chain is on the periplasmic side. The next 2 membrane-spanning stretches (helical) occupy residues 107–127 (LVIL…GLII) and 128–148 (AYLN…VYGI). Over 149–180 (NSLYYDFVGASPISGFDSGFSTFAQGFVALGS) the chain is Periplasmic. A helical transmembrane segment spans residues 181–201 (FRLSYITFYALIAVAFVWVLW). Topologically, residues 202 to 226 (NKTRFGKNIFAIGGNPEAAKVSGVN) are cytoplasmic. Residues 227–247 (VGLNLLMIYALSGVFYAFGGM) traverse the membrane as a helical segment. Topologically, residues 248–256 (LEAGRIGSA) are periplasmic. A helical membrane pass occupies residues 257-277 (TNNLGFMYELDAIAACVVGGV). Residue S278 is a topological domain, cytoplasmic. The helical transmembrane segment at 279–299 (FSGGVGTVIGVVTGVIIFTVI) threads the bilayer. Over 300-305 (NYGLTY) the chain is Periplasmic. A helical transmembrane segment spans residues 306-326 (IGVNPYWQYIIKGAIIIFAVA). At 327–336 (LDSLKYARKK) the chain is on the cytoplasmic side.

The protein belongs to the binding-protein-dependent transport system permease family. AraH/RbsC subfamily. The complex is composed of one ATP-binding protein (MglA), two transmembrane proteins (MglC) and a solute-binding protein (MglB).

It localises to the cell inner membrane. Part of the ABC transporter complex MglABC involved in galactose/methyl galactoside import. Probably responsible for the translocation of the substrate across the membrane. This Escherichia coli (strain K12) protein is Galactose/methyl galactoside import permease protein MglC (mglC).